The primary structure comprises 634 residues: 1-phosphatidylinositol 4,5-bisphosphate phosphodiesterase zeta-1 (634 aa).

An EF-hand domain is found at 35–70; that stretch reads CNTIHVKYIFKDNDRLKQGRITIEEFRTIYRIITYR. The PI-PLC X-box domain maps to 155–299; that stretch reads QDMTHPLTDY…LKFKILVRNK (145 aa). Catalysis depends on residues His170 and His215. The interval 312–345 is disordered; it reads GSDMHGKVEEFEEEEEIEQEEDGSGAKEPEPVGD. Acidic residues predominate over residues 321 to 334; that stretch reads EFEEEEEIEQEEDG. The 117-residue stretch at 376 to 492 folds into the PI-PLC Y-box domain; it reads LSDLVIYTKV…GYVLKPRFLR (117 aa). A C2 domain is found at 492 to 615; that stretch reads RDKKTKFNPH…RGYRRVPLFS (124 aa).

As to quaternary structure, interacts (via its C2 domain) with PtdIns(3)P and, to a lesser extent, PtdIns(5)P in vitro. Ca(2+) serves as cofactor.

The protein localises to the nucleus. The protein resides in the cytoplasm. It is found in the perinuclear region. It catalyses the reaction a 1,2-diacyl-sn-glycero-3-phospho-(1D-myo-inositol-4,5-bisphosphate) + H2O = 1D-myo-inositol 1,4,5-trisphosphate + a 1,2-diacyl-sn-glycerol + H(+). Its function is as follows. The production of the second messenger molecules diacylglycerol (DAG) and inositol 1,4,5-trisphosphate (IP3) is mediated by activated phosphatidylinositol-specific phospholipase C enzymes. In vitro, hydrolyzes PtdIns(4,5)P2 in a Ca(2+)-dependent manner. Triggers intracellular Ca(2+) oscillations in oocytes solely during M phase and is involved in inducing oocyte activation and initiating embryonic development up to the blastocyst stage. Is therefore a strong candidate for the egg-activating soluble sperm factor that is transferred from the sperm into the egg cytoplasm following gamete membrane fusion. May exert an inhibitory effect on phospholipase-C-coupled processes that depend on calcium ions and protein kinase C, including CFTR trafficking and function. The polypeptide is 1-phosphatidylinositol 4,5-bisphosphate phosphodiesterase zeta-1 (Bos taurus (Bovine)).